Here is a 964-residue protein sequence, read N- to C-terminus: Glycine dehydrogenase (decarboxylating) (964 aa).

N6-(pyridoxal phosphate)lysine is present on Lys711.

The protein belongs to the GcvP family. In terms of assembly, the glycine cleavage system is composed of four proteins: P, T, L and H. The cofactor is pyridoxal 5'-phosphate.

It catalyses the reaction N(6)-[(R)-lipoyl]-L-lysyl-[glycine-cleavage complex H protein] + glycine + H(+) = N(6)-[(R)-S(8)-aminomethyldihydrolipoyl]-L-lysyl-[glycine-cleavage complex H protein] + CO2. Its function is as follows. The glycine cleavage system catalyzes the degradation of glycine. The P protein binds the alpha-amino group of glycine through its pyridoxal phosphate cofactor; CO(2) is released and the remaining methylamine moiety is then transferred to the lipoamide cofactor of the H protein. The protein is Glycine dehydrogenase (decarboxylating) of Prochlorococcus marinus (strain SARG / CCMP1375 / SS120).